A 191-amino-acid polypeptide reads, in one-letter code: Small ribosomal subunit protein uS9c (191 aa).

Residues 166-191 (TQDSRVKERRKYGLKKARKASQYHKR) are disordered. The span at 172 to 191 (KERRKYGLKKARKASQYHKR) shows a compositional bias: basic residues.

Belongs to the universal ribosomal protein uS9 family.

The protein localises to the plastid. It is found in the chloroplast. This chain is Small ribosomal subunit protein uS9c (rps9), found in Chlamydomonas reinhardtii (Chlamydomonas smithii).